Here is a 644-residue protein sequence, read N- to C-terminus: Exoribonuclease 2 (644 aa).

The RNB domain occupies arginine 189–lysine 516. Positions aspartate 561–alanine 643 constitute an S1 motif domain.

It belongs to the RNR ribonuclease family. RNase II subfamily.

Its subcellular location is the cytoplasm. The catalysed reaction is Exonucleolytic cleavage in the 3'- to 5'-direction to yield nucleoside 5'-phosphates.. Its function is as follows. Involved in mRNA degradation. Hydrolyzes single-stranded polyribonucleotides processively in the 3' to 5' direction. The protein is Exoribonuclease 2 of Klebsiella pneumoniae subsp. pneumoniae (strain ATCC 700721 / MGH 78578).